A 62-amino-acid polypeptide reads, in one-letter code: MAKSKSSRVGISLECTACRANANQPGVNRYRTTKNKKNTPNRLELKKFCPYCGHHTIHREIK.

Belongs to the bacterial ribosomal protein bL33 family.

The protein resides in the plastid. The protein localises to the chloroplast. The polypeptide is Large ribosomal subunit protein bL33c (Cyanidioschyzon merolae (strain NIES-3377 / 10D) (Unicellular red alga)).